Here is a 636-residue protein sequence, read N- to C-terminus: uncharacterized protein (636 aa).

The next 3 membrane-spanning stretches (helical) occupy residues 12–32 (AVIY…FGSI), 34–54 (IMHL…TTTG), and 75–95 (IGAG…FMSF). Positions 112 to 231 (KNHFILCGFG…KKAGANRIIS (120 aa)) constitute an RCK N-terminal domain.

Its subcellular location is the cell membrane. This is an uncharacterized protein from Methanothermus fervidus (strain ATCC 43054 / DSM 2088 / JCM 10308 / V24 S).